The chain runs to 22 residues: Dioicin-1 (22 aa).

The protein localises to the secreted. It localises to the extracellular space. It is found in the golgi apparatus. The protein resides in the vacuole. The catalysed reaction is Endohydrolysis of the N-glycosidic bond at one specific adenosine on the 28S rRNA.. Functionally, nicks pBR322 dsDNA. Has adenine polynucleotide glycosidase activity on herring sperm ssDNA. This is Dioicin-1 from Phytolacca dioica (Bella sombra tree).